Reading from the N-terminus, the 248-residue chain is Putative TrmH family tRNA/rRNA methyltransferase (248 aa).

The S-adenosyl-L-methionine site is built by Gly196, Ile216, and Leu225.

This sequence belongs to the class IV-like SAM-binding methyltransferase superfamily. RNA methyltransferase TrmH family.

This is Putative TrmH family tRNA/rRNA methyltransferase from Staphylococcus aureus (strain COL).